Here is a 1004-residue protein sequence, read N- to C-terminus: MAKQEQAPDRANDVFALTSFLYGGNADYIEELYAKYEDDPNSVDPQWRDFFAKLGDNADDVKKNAEGPSWTRKNWPIAANGELVSALDGNWAEVEKHVADKLKGKAAKGEAKGAAGTPLTAEEITQAARDSVRAIMMIRAYRMRGHLHANLDPLGLAEKPNDYNELEPENYGFTPADYNRKIFIDNVLGLEYATVPEMLDILKRTYCGAIGVEFMHISDPAEKAWIQERIEGPDKKVAFTPEGKKAILSKLIEAEGFEQFIDVKYKGTKRFGLDGGESLIPALEQIVKRGGQMGLKEVVLGMAHRGRLNVLSQVMGKPHRAIFHEFKGGSYTPDDVEGSGDVKYHLGASSDREFDGNKVHLSLTANPSHLEIVNPVVMGKARAKQDLLVGRTRDDMVPLSERAKVLPLLLHGDAAFAGQGVVAECLGLSGLKGHRVAGTLHFIINNQIGFTTNPAFSRSSPYPSDVAKMIEAPIFHVNGDDPEAVVFAAKVATEFRMTFHKPVVIDMFCYRRFGHNEGDEPSFTQPLMYKAIRAHKTTVQLYGEKLIAEGLVTQDDIDRMKADWRQKLEGEFEAGQSYKPNKADWLDGAWAGLRTADNADEQRRGKTAVPVKTLKEIGKKLVEVPKDFHVHRTIQRFLDNRAKMMETGEGIDWATAESLAFGSLAVEGHPIRLSGQDVERGTFSQRHTVLYDQENQNRYIPLNNLQKGQAIYEAINSMLSEEAVLGYEYGYSLSDPRALVLWEAQFGDFANGAQVVFDQFISSGERKWLRMSGLVCLLPHGFEGQGPEHSSARLERYLQLCAEDNMQVANVTTPANYFHILRRQMKRDFRKPLIMMTPKSLLRHKRAISTLAELSGESSFHRLLWDDAQYNKDEGIKLQKDAKIRRVVLCSGKVYYDLYEEREKRGIDDVYLLRVEQLYPFPAKALINELSRFRHAEMVWCQEEPKNMGAWSFIDPYLEWVLAHIDAKHQRVRYAGRPAAASPATGLMSKHLAQLAAFLEDALG.

The protein belongs to the alpha-ketoglutarate dehydrogenase family. Homodimer. Part of the 2-oxoglutarate dehydrogenase (OGDH) complex composed of E1 (2-oxoglutarate dehydrogenase), E2 (dihydrolipoamide succinyltransferase) and E3 (dihydrolipoamide dehydrogenase); the complex contains multiple copies of the three enzymatic components (E1, E2 and E3). It depends on thiamine diphosphate as a cofactor.

The catalysed reaction is N(6)-[(R)-lipoyl]-L-lysyl-[protein] + 2-oxoglutarate + H(+) = N(6)-[(R)-S(8)-succinyldihydrolipoyl]-L-lysyl-[protein] + CO2. Its function is as follows. E1 component of the 2-oxoglutarate dehydrogenase (OGDH) complex which catalyzes the decarboxylation of 2-oxoglutarate, the first step in the conversion of 2-oxoglutarate to succinyl-CoA and CO(2). This is 2-oxoglutarate dehydrogenase E1 component from Brucella canis (strain ATCC 23365 / NCTC 10854 / RM-666).